A 58-amino-acid polypeptide reads, in one-letter code: ATP synthase subunit a (58 aa).

2 helical membrane passes run 11 to 31 (EIFY…LTGL) and 35 to 55 (VAIL…NDAI).

The protein belongs to the ATPase A chain family. F-type ATPases have 2 components, CF(1) - the catalytic core - and CF(0) - the membrane proton channel. CF(1) has five subunits: alpha(3), beta(3), gamma(1), delta(1), epsilon(1). CF(0) has three main subunits: a, b and c.

Its subcellular location is the mitochondrion inner membrane. In terms of biological role, mitochondrial membrane ATP synthase (F(1)F(0) ATP synthase or Complex V) produces ATP from ADP in the presence of a proton gradient across the membrane which is generated by electron transport complexes of the respiratory chain. F-type ATPases consist of two structural domains, F(1) - containing the extramembraneous catalytic core and F(0) - containing the membrane proton channel, linked together by a central stalk and a peripheral stalk. During catalysis, ATP synthesis in the catalytic domain of F(1) is coupled via a rotary mechanism of the central stalk subunits to proton translocation. Key component of the proton channel; it may play a direct role in the translocation of protons across the membrane. This is ATP synthase subunit a (ATP6) from Brassica tournefortii (Wild turnip).